The primary structure comprises 498 residues: Type II secretion system protein E (498 aa).

4 residues coordinate Zn(2+): Cys394, Cys397, Cys425, and Cys428.

The protein belongs to the GSP E family. As to quaternary structure, forms homooligomers; most probably hexamers. Interacts with OutL/GspL. Zn(2+) serves as cofactor.

The protein resides in the cell inner membrane. The enzyme catalyses ATP + H2O + cellular proteinSide 1 = ADP + phosphate + cellular proteinSide 2.. In terms of biological role, ATPase component of the type II secretion system required for the energy-dependent secretion of extracellular factors such as proteases and toxins from the periplasm. Acts as a molecular motor to provide the energy that is required for assembly of the pseudopilus and the extrusion of substrates generated in the cytoplasm. The sequence is that of Type II secretion system protein E (outE) from Dickeya dadantii (strain 3937) (Erwinia chrysanthemi (strain 3937)).